The primary structure comprises 610 residues: Diol dehydratase-reactivating factor large subunit (610 aa).

11–13 (NSS) is an ATP binding site. 3 residues coordinate Mg(2+): threonine 105, aspartate 166, and aspartate 183. Residues 459 to 462 (EEIK), 557 to 558 (GS), and arginine 591 each bind ATP.

It belongs to the DdrA/PduG family. Component of the DDR complex, a heterotetramer of DdrA(2)/DdrB(2). The DDR complex interacts with the diol dehydratase complex in the presence of ADP but not ATP. Mg(2+) is required as a cofactor.

It carries out the reaction ATP + H2O = ADP + phosphate + H(+). Its function is as follows. Large subunit of the diol dehydratase-reactivating factor (DDR), which reactivates suicidally inhibited adenosylcobalamin-dependent diol dehydratase (DD, pddA, pddB, pddC). DDR acts as a chaperone, reactivating inactivated DD holoenzyme in the presence of ATP, Mg(2+) and free adenosylcobalamin (AdoCbl), by mediating the exchange of the tightly bound damaged cofactor AdoCbl for a free intact one. Reactivation takes place in two steps: ADP-dependent cobalamin release, then ATP-dependent dissociation of the DD apoenzyme-DDR complex. DDR has weak ATPase activity which is required for DD reactivation. This subunit contains the adenosine nucleotide binding site. Activates glycerol-inactivated, O2-inactivated holoenzyme and inactivated enzyme-cyanocobalamin complex. Also reactivates glycerol-inactivated hologlycerol dehydratase, a DD isozyme. The sequence is that of Diol dehydratase-reactivating factor large subunit from Klebsiella michiganensis (strain ATCC 8724 / DSM 4798 / JCM 20051 / NBRC 3318 / NRRL B-199 / KCTC 1686 / BUCSAV 143 / CCM 1901).